The primary structure comprises 350 residues: MSEQKQSLSYKDAGVDIDAGNALVERIKGVVKKTRRPEVMGGIGGFGALCEIPAGYKQPVLVAGTDGVGTKLRLAIDLKKHDTVGIDLVAMCVNDLIVQGAEPLFFLDYYATGKLDVDTAADVVTGIGKGCEISGCALIGGETAEMPGMYDGEDYDMAGFCTGVVEKSKIIDGTKVAAGDQLIALASSGPHSNGFSLIRKVLEVSNADTSADFEGKTLGETLLEPTRIYVKPLLELFKHVDVHALSHITGGGFWENIPRVLPASAKAVVKGDSWQWPPIFNWLQENGNITTHEMYRTFNCGVGMVLVVPADKLEQSLSMLKDLGENAWHLGEIQDAAPGEEQVEIVGGAK.

This sequence belongs to the AIR synthase family.

It localises to the cytoplasm. It carries out the reaction 2-formamido-N(1)-(5-O-phospho-beta-D-ribosyl)acetamidine + ATP = 5-amino-1-(5-phospho-beta-D-ribosyl)imidazole + ADP + phosphate + H(+). The protein operates within purine metabolism; IMP biosynthesis via de novo pathway; 5-amino-1-(5-phospho-D-ribosyl)imidazole from N(2)-formyl-N(1)-(5-phospho-D-ribosyl)glycinamide: step 2/2. This Pseudoalteromonas translucida (strain TAC 125) protein is Phosphoribosylformylglycinamidine cyclo-ligase.